Reading from the N-terminus, the 471-residue chain is Putative multidrug resistance protein MdtD (471 aa).

Topologically, residues 1–11 are periplasmic; the sequence is MTDLPDSTRWQ. A helical transmembrane segment spans residues 12–32; that stretch reads LWIVAFGFFMQSLDTTIVNTA. The Cytoplasmic segment spans residues 33-48; sequence LPSMAQSLGESPLHMH. The helical transmembrane segment at 49-69 threads the bilayer; the sequence is MVIVSYVLTVAVMLPASGWLA. At 70–76 the chain is on the periplasmic side; that stretch reads DKVGVRN. The chain crosses the membrane as a helical span at residues 77 to 97; it reads IFFTAIVLFTLGSLFCALSGT. Residues 98 to 101 are Cytoplasmic-facing; the sequence is LNEL. The helical transmembrane segment at 102 to 124 threads the bilayer; that stretch reads LLARALQGVGGAMMVPVGRLTVM. Topologically, residues 125–137 are periplasmic; that stretch reads KIVPREQYMAAMT. A helical transmembrane segment spans residues 138-158; the sequence is FVTLPGQVGPLLGPALGGLLV. The Cytoplasmic portion of the chain corresponds to 159-164; that stretch reads EYASWH. Residues 165–185 form a helical membrane-spanning segment; the sequence is WIFLINIPVGIIGAIATLMLM. Over 186–196 the chain is Periplasmic; it reads PNYTMQTRRFD. The helical transmembrane segment at 197 to 217 threads the bilayer; sequence LSGFLLLAVGMAVLTLALDGS. Residues 218–224 lie on the Cytoplasmic side of the membrane; it reads KGTGLSP. A helical transmembrane segment spans residues 225 to 245; that stretch reads LAIAGLVAVGVVALVLYLLHA. Residues 246–262 lie on the Periplasmic side of the membrane; the sequence is RNNNRALFSLKLFRTRT. A helical transmembrane segment spans residues 263–283; it reads FSLGLAGSFAGRIGSGMLPFM. Topologically, residues 284 to 285 are cytoplasmic; sequence TP. Residues 286–306 traverse the membrane as a helical segment; that stretch reads VFLQIGLGFSPFHAGLMMIPM. At 307–341 the chain is on the periplasmic side; that stretch reads VLGSMGMKRIVVQVVNRFGYRRVLVATTLGLSLVT. A helical transmembrane segment spans residues 342 to 362; sequence LLFMTTALLGWYYVLPFVLFL. Residues 363–395 are Cytoplasmic-facing; the sequence is QGMVNSTRFSSMNTLTLKDLPDNLASSGNSLLS. The helical transmembrane segment at 396-416 threads the bilayer; it reads MIMQLSMSIGVTIAGLLLGLF. Residues 417–430 lie on the Periplasmic side of the membrane; sequence GSQHVSVDSGTTQT. Residues 431–451 traverse the membrane as a helical segment; that stretch reads VFMYTWLSMAFIIALPAFIFA. The Cytoplasmic portion of the chain corresponds to 452–471; that stretch reads RVPNDTHQNVAISRRKRSAQ.

Belongs to the major facilitator superfamily. TCR/Tet family.

It is found in the cell inner membrane. The protein is Putative multidrug resistance protein MdtD of Escherichia coli (strain SMS-3-5 / SECEC).